The following is a 433-amino-acid chain: tRNA modification GTPase MnmE (433 aa).

3 residues coordinate (6S)-5-formyl-5,6,7,8-tetrahydrofolate: arginine 24, glutamate 81, and arginine 120. The TrmE-type G domain occupies glycine 216 to glutamate 359. Asparagine 226 is a binding site for K(+). GTP is bound by residues asparagine 226–threonine 231, serine 245–threonine 251, aspartate 270–glycine 273, and serine 340–arginine 342. Position 230 (serine 230) interacts with Mg(2+). 3 residues coordinate K(+): serine 245, isoleucine 247, and threonine 250. Threonine 251 contributes to the Mg(2+) binding site. Lysine 433 serves as a coordination point for (6S)-5-formyl-5,6,7,8-tetrahydrofolate.

This sequence belongs to the TRAFAC class TrmE-Era-EngA-EngB-Septin-like GTPase superfamily. TrmE GTPase family. Homodimer. Heterotetramer of two MnmE and two MnmG subunits. It depends on K(+) as a cofactor.

It localises to the cytoplasm. Exhibits a very high intrinsic GTPase hydrolysis rate. Involved in the addition of a carboxymethylaminomethyl (cmnm) group at the wobble position (U34) of certain tRNAs, forming tRNA-cmnm(5)s(2)U34. This Acidiphilium cryptum (strain JF-5) protein is tRNA modification GTPase MnmE.